A 66-amino-acid polypeptide reads, in one-letter code: Large ribosomal subunit protein bL35 (66 aa).

Belongs to the bacterial ribosomal protein bL35 family.

The protein is Large ribosomal subunit protein bL35 of Azorhizobium caulinodans (strain ATCC 43989 / DSM 5975 / JCM 20966 / LMG 6465 / NBRC 14845 / NCIMB 13405 / ORS 571).